Reading from the N-terminus, the 369-residue chain is Phospho-N-acetylmuramoyl-pentapeptide-transferase (369 aa).

The next 10 helical transmembrane spans lie at 2-22 (IALLIGAGLALLFALVGTPLF), 55-75 (TVVVFAVLLSYALTHLIMWMM), 86-106 (ALLLLFLMVGMGLVGFLDDFI), 122-142 (LVLQGAVGIIFAILALNFPNA), 158-178 (IPWLNLAFGGTVLGAILFVLW), 196-216 (LDGLAAGASVMVFGAYTLMGI), 239-259 (PLDLALLAAILSAALVGFLWW), 266-286 (IFMGDTGSLAIGGAVAGFAIL), 291-311 (LLLAFIGGLFVLITLSVIIQV), and 348-368 (ILGGLFVAAGLGIFYAEWVVL).

Belongs to the glycosyltransferase 4 family. MraY subfamily. Requires Mg(2+) as cofactor.

Its subcellular location is the cell membrane. It carries out the reaction UDP-N-acetyl-alpha-D-muramoyl-L-alanyl-gamma-D-glutamyl-meso-2,6-diaminopimeloyl-D-alanyl-D-alanine + di-trans,octa-cis-undecaprenyl phosphate = di-trans,octa-cis-undecaprenyl diphospho-N-acetyl-alpha-D-muramoyl-L-alanyl-D-glutamyl-meso-2,6-diaminopimeloyl-D-alanyl-D-alanine + UMP. Its pathway is cell wall biogenesis; peptidoglycan biosynthesis. Catalyzes the initial step of the lipid cycle reactions in the biosynthesis of the cell wall peptidoglycan: transfers peptidoglycan precursor phospho-MurNAc-pentapeptide from UDP-MurNAc-pentapeptide onto the lipid carrier undecaprenyl phosphate, yielding undecaprenyl-pyrophosphoryl-MurNAc-pentapeptide, known as lipid I. The chain is Phospho-N-acetylmuramoyl-pentapeptide-transferase from Arthrobacter sp. (strain FB24).